Here is a 104-residue protein sequence, read N- to C-terminus: SOSS complex subunit C (104 aa).

This sequence belongs to the SOSS-C family. In terms of assembly, belongs to the multiprotein complex Integrator. Component of the SOSS complex, composed of SOSS-B (SOSS-B1/NABP2 or SOSS-B2/NABP1), SOSS-A/INTS3 and SOSS-C/INIP.

It localises to the nucleus. Functionally, component of the SOSS complex, a multiprotein complex that functions downstream of the MRN complex to promote DNA repair and G2/M checkpoint. The SOSS complex associates with single-stranded DNA at DNA lesions and influences diverse endpoints in the cellular DNA damage response including cell-cycle checkpoint activation, recombinational repair and maintenance of genomic stability. Required for efficient homologous recombination-dependent repair of double-strand breaks (DSBs). The chain is SOSS complex subunit C (INIP) from Taeniopygia guttata (Zebra finch).